The following is a 342-amino-acid chain: S-adenosylmethionine:tRNA ribosyltransferase-isomerase (342 aa).

Belongs to the QueA family. As to quaternary structure, monomer.

It localises to the cytoplasm. It catalyses the reaction 7-aminomethyl-7-carbaguanosine(34) in tRNA + S-adenosyl-L-methionine = epoxyqueuosine(34) in tRNA + adenine + L-methionine + 2 H(+). The protein operates within tRNA modification; tRNA-queuosine biosynthesis. Its function is as follows. Transfers and isomerizes the ribose moiety from AdoMet to the 7-aminomethyl group of 7-deazaguanine (preQ1-tRNA) to give epoxyqueuosine (oQ-tRNA). The sequence is that of S-adenosylmethionine:tRNA ribosyltransferase-isomerase from Zymomonas mobilis subsp. mobilis (strain ATCC 31821 / ZM4 / CP4).